The primary structure comprises 174 residues: Co-chaperone protein HscB homolog (174 aa).

The 73-residue stretch at 2 to 74 folds into the J domain; it reads NYFELFKFSP…IRRAEHMLSL (73 aa).

This sequence belongs to the HscB family. In terms of assembly, interacts with HscA and stimulates its ATPase activity.

In terms of biological role, co-chaperone involved in the maturation of iron-sulfur cluster-containing proteins. Seems to help targeting proteins to be folded toward HscA. The polypeptide is Co-chaperone protein HscB homolog (Shewanella sp. (strain ANA-3)).